The chain runs to 247 residues: Small ribosomal subunit protein uS2 (247 aa).

It belongs to the universal ribosomal protein uS2 family.

This Ralstonia pickettii (strain 12J) protein is Small ribosomal subunit protein uS2.